The chain runs to 161 residues: Cell division control protein 31 (161 aa).

4 EF-hand domains span residues 20 to 55, 56 to 91, 93 to 128, and 129 to 161; these read EQKQEIYEAFSLFDMNNDGFLDYHELKVAMKALGFE, LPKREILDLIDEYDSEGRHLMKYDDFYIVMGEKILK, DPLDEIKRAFQLFDDDHTGKISIKNLRRVAKELGET, and LTDEELRAMIEEFDLDGDGEINENEFIAICTDS. Aspartate 33, asparagine 35, aspartate 37, and glutamate 44 together coordinate Ca(2+). At threonine 130 the chain carries Phosphothreonine. Ca(2+) contacts are provided by aspartate 142, aspartate 144, aspartate 146, glutamate 148, and glutamate 153.

The protein belongs to the centrin family. As to quaternary structure, component of the spindle pole body (SPB), acting as the connector of microtubule arrays in the cytoplasm and the nucleoplasm, is involved in nuclear positioning before chromosome segregation, SPB separation, spindle formation, chromosome segregation, nuclear migration into the bud, nuclear reorientation after cytokinesis and nuclear fusion during conjugation. The SPB half-bridge, which is tightly associated with the cytoplasmic side of the nuclear envelope and the SPB, is playing a key role as the starting structure for and in the initiation of SPB duplication in G1. At the SPB half-bridge CDC31 interacts with KAR1, MPS3 and SFI1. Interacts with KIC1. Interacts with VPS13. Associates with nuclear pore complexes (NPCs).

The protein resides in the nucleus envelope. It is found in the cytoplasm. It localises to the cytoskeleton. The protein localises to the microtubule organizing center. Its subcellular location is the spindle pole body. Functionally, functions as a component of the spindle pole body (SPB) half-bridge. At the SPB, it is recruited by KAR1 and MPS3 to the SPB half-bridge and involved in the initial steps of SPB duplication. Also involved in connection with the protein kinase KIC1 in the maintenance of cell morphology and integrity. May play a role in vesicle-mediated transport, in a VPS13-dependent manner. This Saccharomyces cerevisiae (strain ATCC 204508 / S288c) (Baker's yeast) protein is Cell division control protein 31 (CDC31).